A 263-amino-acid polypeptide reads, in one-letter code: MSSAEGPKSGGGSKGSKSEASSRVRGSAPTGSRDLFVRVRTAKGRKASSTRWLQRQLNDPYVLEAKRQGLRSRAAFKLIELDERFTLLKPGMRVVDLGAAPGGWTQIAVERTRSLHPNGGKVVGMDILEWEGVAGATCLTHDFMDDAAPLMLKGAMDGAVDLVLSDMAAPTTGHRQTDHLRVMGLAEAAWYFAEEVLAPGGAFVCKVFQGGTEGALLTRMKKMCEVIRHAKPPASRQGSPEVYVIAQGFRGLSGGEDTGRDES.

A disordered region spans residues 1–34 (MSSAEGPKSGGGSKGSKSEASSRVRGSAPTGSRD). S-adenosyl-L-methionine is bound by residues G102, W104, D126, D142, and D166. K206 (proton acceptor) is an active-site residue.

Belongs to the class I-like SAM-binding methyltransferase superfamily. RNA methyltransferase RlmE family.

Its subcellular location is the cytoplasm. It catalyses the reaction uridine(2552) in 23S rRNA + S-adenosyl-L-methionine = 2'-O-methyluridine(2552) in 23S rRNA + S-adenosyl-L-homocysteine + H(+). Specifically methylates the uridine in position 2552 of 23S rRNA at the 2'-O position of the ribose in the fully assembled 50S ribosomal subunit. The chain is Ribosomal RNA large subunit methyltransferase E from Rhodospirillum rubrum (strain ATCC 11170 / ATH 1.1.1 / DSM 467 / LMG 4362 / NCIMB 8255 / S1).